The following is a 637-amino-acid chain: 1-deoxy-D-xylulose-5-phosphate synthase (637 aa).

Thiamine diphosphate-binding positions include His76 and 117–119; that span reads GHS. Asp148 provides a ligand contact to Mg(2+). Residues 149–150, Asn177, Tyr294, and Glu381 each bind thiamine diphosphate; that span reads GA. Residue Asn177 coordinates Mg(2+).

Belongs to the transketolase family. DXPS subfamily. Homodimer. The cofactor is Mg(2+). Thiamine diphosphate serves as cofactor.

It catalyses the reaction D-glyceraldehyde 3-phosphate + pyruvate + H(+) = 1-deoxy-D-xylulose 5-phosphate + CO2. Its pathway is metabolic intermediate biosynthesis; 1-deoxy-D-xylulose 5-phosphate biosynthesis; 1-deoxy-D-xylulose 5-phosphate from D-glyceraldehyde 3-phosphate and pyruvate: step 1/1. Catalyzes the acyloin condensation reaction between C atoms 2 and 3 of pyruvate and glyceraldehyde 3-phosphate to yield 1-deoxy-D-xylulose-5-phosphate (DXP). This chain is 1-deoxy-D-xylulose-5-phosphate synthase, found in Neisseria meningitidis serogroup C / serotype 2a (strain ATCC 700532 / DSM 15464 / FAM18).